A 465-amino-acid polypeptide reads, in one-letter code: Mothers against decapentaplegic homolog 1 (465 aa).

Met-1 is subject to N-acetylmethionine. An MH1 domain is found at 12 to 136; that stretch reads PAVKRLLGWK…YKRVESPVLP (125 aa). Residues Cys-64, Cys-109, Cys-121, and His-126 each contribute to the Zn(2+) site. The segment at 162-246 is disordered; sequence NEPHMPLNAT…DGSQPMDTNM (85 aa). Residues 179–212 are compositionally biased toward low complexity; the sequence is PNSHPFPHSPNSSYPNSPGGSSSTYPHSPTSSDP. Residues 221 to 232 are compositionally biased toward pro residues; sequence DTPPPAYLPPED. The 195-residue stretch at 271 to 465 folds into the MH2 domain; sequence WCSIVYYELN…SPHNPISSVS (195 aa). Residue Thr-322 is modified to Phosphothreonine; by MINK1, TNIK and MAP4K4. Residues 418-428 are L3 loop; the sequence is KGWGAEYHRQD. Phosphoserine is present on residues Ser-463 and Ser-465.

Belongs to the dwarfin/SMAD family. In terms of assembly, found in a complex with SMAD4 and YY1. Interacts with HGS, NANOG and ZCCHC12. Upon C-terminus phosphorylation: forms trimers with another SMAD1 and the co-SMAD SMAD4. Interacts with PEBP2-alpha subunit, CREB-binding protein (CBP), p300, SMURF1, SMURF2, USP15 and HOXC8. Associates with ZNF423 or ZNF521 in response to BMP2 leading to activate transcription of BMP target genes. Interacts with SKOR1. Interacts (via MH2 domain) with LEMD3. Binding to LEMD3 results in at least a partial reduction of receptor-mediated phosphorylation. Forms a ternary complex with PSMB4 and OAZ1 before PSMB4 is incorporated into the 20S proteasome. Interacts (via MH2 domain) with FAM83G (via MH2 domain); in a SMAD4-independent manner. Interacts with ZC3H3. Interacts with TMEM119. Interacts (via MH1 and MH2 domains) with ZNF8. Interacts with RANBP3L; the interaction increases when SMAD1 is not phosphorylated and mediates SMAD1 nuclear export. Interacts with EGR1; this interaction inhibits SMAD1 dephosphorylation. Interacts with SMAD6. Interacts with YAP1. Interacts with MTMR4; negatively regulates BMP signaling through SMAD1 dephosphorylation and retention in endosomes. Post-translationally, phosphorylation of the C-terminal SVS motif by BMP type 1 receptor kinase activates SMAD1 by promoting dissociation from the receptor and trimerization with SMAD4. Phosphorylation by ERK2 MAP kinase in response to EGF or HGF prevents SMAD1 nuclear accumulation and transcriptional activity in response to BMP. Dephosphorylation, probably by PPM1A, induces its export from the nucleus to the cytoplasm. Dephosphorylation is inhibited by association with EGR1. Phosphorylation by CDK8/9 creates binding sites for YAP1, and subsequent phosphorylation by GSK3 switches off YAP1 binding and adds binding sites for SMURF1. In terms of processing, ubiquitinated by SMAD-specific E3 ubiquitin ligase SMURF1, leading to its degradation. Monoubiquitinated, leading to prevent DNA-binding. Deubiquitination by USP15 alleviates inhibition and promotes activation of TGF-beta target genes. Dephosphorylation, probably by PPM1A, induces its export from the nucleus to the cytoplasm. Phospho-SMAD1 is ubiquitinated by CHIP leading to disruption of the SMAD1-SMAD4 complex. As to expression, ubiquitous.

The protein resides in the cytoplasm. The protein localises to the nucleus. In terms of biological role, transcriptional modulator that plays a role in various cellular processes, including embryonic development, cell differentiation, and tissue homeostasis. Upon BMP ligand binding to their receptors at the cell surface, is phosphorylated by activated type I BMP receptors (BMPRIs) and associates with SMAD4 to form a heteromeric complex which translocates into the nucleus acting as transcription factor. In turn, the hetero-trimeric complex recognizes cis-regulatory elements containing Smad Binding Elements (SBEs) to modulate the outcome of the signaling network. SMAD1/OAZ1/PSMB4 complex mediates the degradation of the CREBBP/EP300 repressor SNIP1. Positively regulates BMP4-induced expression of odontogenic development regulator MSX1 following IPO7-mediated nuclear import. In Mus musculus (Mouse), this protein is Mothers against decapentaplegic homolog 1 (Smad1).